The sequence spans 689 residues: Glycine--tRNA ligase beta subunit (689 aa).

This sequence belongs to the class-II aminoacyl-tRNA synthetase family. Tetramer of two alpha and two beta subunits.

The protein resides in the cytoplasm. It catalyses the reaction tRNA(Gly) + glycine + ATP = glycyl-tRNA(Gly) + AMP + diphosphate. This is Glycine--tRNA ligase beta subunit from Escherichia coli O7:K1 (strain IAI39 / ExPEC).